Reading from the N-terminus, the 294-residue chain is Elongation factor Ts (294 aa).

The involved in Mg(2+) ion dislocation from EF-Tu stretch occupies residues 80 to 83 (TDFV).

The protein belongs to the EF-Ts family.

The protein localises to the cytoplasm. In terms of biological role, associates with the EF-Tu.GDP complex and induces the exchange of GDP to GTP. It remains bound to the aminoacyl-tRNA.EF-Tu.GTP complex up to the GTP hydrolysis stage on the ribosome. This Listeria monocytogenes serotype 4b (strain CLIP80459) protein is Elongation factor Ts.